We begin with the raw amino-acid sequence, 463 residues long: Glycine--tRNA ligase (463 aa).

Residues arginine 98 and glutamate 170 each coordinate substrate. ATP is bound by residues 202 to 204, 212 to 217, 287 to 288, and 331 to 334; these read RNE, FRTREF, EL, and GIER. A substrate-binding site is contributed by 217–221; the sequence is FEQFE. Residue 327–331 participates in substrate binding; it reads EPSLG.

This sequence belongs to the class-II aminoacyl-tRNA synthetase family. Homodimer.

The protein localises to the cytoplasm. The catalysed reaction is tRNA(Gly) + glycine + ATP = glycyl-tRNA(Gly) + AMP + diphosphate. Its function is as follows. Catalyzes the attachment of glycine to tRNA(Gly). This chain is Glycine--tRNA ligase, found in Mycoplasmoides gallisepticum (strain R(low / passage 15 / clone 2)) (Mycoplasma gallisepticum).